We begin with the raw amino-acid sequence, 471 residues long: U1 small nuclear ribonucleoprotein 70 kDa (471 aa).

The segment at 48 to 78 (FEDPRDAPPPTRAETREERMERKRREKIERR) is disordered. Basic and acidic residues predominate over residues 60–78 (AETREERMERKRREKIERR). Residues 92 to 202 (HNDQNAQGDA…GGGLGGTRRG (111 aa)) are required for interaction with U1 RNA. One can recognise an RRM domain in the interval 103–184 (KTLFVARVNY…LVDVERGRTV (82 aa)). Residues 187-471 (WRPRRLGGGL…NGYMMEPPME (285 aa)) are disordered. A compositionally biased stretch (gly residues) spans 192–201 (LGGGLGGTRR). Positions 207–245 (NIRHSGRDDTSRYDERDRDRERERDRRERSRERDKERER) are enriched in basic and acidic residues. Residues 246 to 259 (RRSRSRERRRRSRS) are compositionally biased toward basic residues. Basic and acidic residues predominate over residues 260-293 (REKEERKRSRERSRDKDKDKDKDKDKEKDKDKDR). Over residues 294 to 303 (DRKRRSRSRE) the composition is skewed to basic residues. Basic and acidic residues-rich tracts occupy residues 304-321 (RKRERDRDREKKEDRVEG) and 344-428 (IELK…ERVP).

As to quaternary structure, component of the U1 snRNP. The U1 snRNP is composed of the U1 snRNA and the 7 core Sm proteins snrpb, snrpd1, snrpd2, snrpd3, snrpe, snrpf and snrpg that assemble in a heptameric protein ring on the Sm site of the small nuclear RNA to form the core snRNP, and at least three U1 snRNP-specific proteins snrnp70/U1-70K, snrpa/U1-A and snrpc/U1-C.

It is found in the nucleus speckle. The protein localises to the nucleus. It localises to the nucleoplasm. In terms of biological role, component of the spliceosomal U1 snRNP, which is essential for recognition of the pre-mRNA 5' splice-site and the subsequent assembly of the spliceosome. snrnp70 binds to the loop I region of U1-snRNA. The protein is U1 small nuclear ribonucleoprotein 70 kDa (snrnp70) of Xenopus tropicalis (Western clawed frog).